The sequence spans 362 residues: Histidinol-phosphate aminotransferase 1 (362 aa).

Lysine 226 carries the post-translational modification N6-(pyridoxal phosphate)lysine.

It belongs to the class-II pyridoxal-phosphate-dependent aminotransferase family. Histidinol-phosphate aminotransferase subfamily. In terms of assembly, homodimer. It depends on pyridoxal 5'-phosphate as a cofactor.

It carries out the reaction L-histidinol phosphate + 2-oxoglutarate = 3-(imidazol-4-yl)-2-oxopropyl phosphate + L-glutamate. The protein operates within amino-acid biosynthesis; L-histidine biosynthesis; L-histidine from 5-phospho-alpha-D-ribose 1-diphosphate: step 7/9. The polypeptide is Histidinol-phosphate aminotransferase 1 (Dechloromonas aromatica (strain RCB)).